The primary structure comprises 303 residues: Putative ankyrin repeat protein R601 (303 aa).

ANK repeat units follow at residues 86 to 115, 117 to 146, 147 to 176, and 200 to 233; these read DDNM…DVTV, NNFA…DITV, DNYF…NVDS, and NADV…DVSY.

This chain is Putative ankyrin repeat protein R601, found in Acanthamoeba polyphaga (Amoeba).